A 234-amino-acid polypeptide reads, in one-letter code: MTENFILGRNNKLEHELKALADYINIPYSILQPYQSECFVRHYTKGQVIYFSPQESSNIYFLIEGNIIREHYNQNGDVYRYFNKEQVLFPISNLFHPKEVNELCTALTDCTVLGLPRELMAFLCKANDDIFLTLFALINDNEQQHMNYNMALTSKFAKDRIIKLFCHLCQTVGYDQDEFYEIKQFLTIQLMSDMAGISRETAGHIIHELKDEKLVVKDHKNWLVSKHLFNDVCV.

Position 40–129 (40–129 (VRHYTKGQVI…MAFLCKANDD (90 aa))) interacts with a nucleoside 3',5'-cyclic phosphate. An HTH crp-type domain is found at 155–228 (KFAKDRIIKL…HKNWLVSKHL (74 aa)). The H-T-H motif DNA-binding region spans 188–207 (IQLMSDMAGISRETAGHIIH).

It is found in the cytoplasm. Its function is as follows. Positively regulates the expression of the arcABDCR operon under anaerobic conditions, thus playing an essential role in arginine catabolism. May also control the expression of genes encoding proteins which are involved in anaerobic metabolism. Can bind cyclic AMP. The chain is HTH-type transcriptional regulator ArcR (arcR) from Staphylococcus aureus (strain MSSA476).